The chain runs to 171 residues: ATP synthase subunit b (171 aa).

Residues Val2–Leu22 form a helical membrane-spanning segment.

Belongs to the ATPase B chain family. As to quaternary structure, F-type ATPases have 2 components, F(1) - the catalytic core - and F(0) - the membrane proton channel. F(1) has five subunits: alpha(3), beta(3), gamma(1), delta(1), epsilon(1). F(0) has three main subunits: a(1), b(2) and c(10-14). The alpha and beta chains form an alternating ring which encloses part of the gamma chain. F(1) is attached to F(0) by a central stalk formed by the gamma and epsilon chains, while a peripheral stalk is formed by the delta and b chains.

It localises to the cell inner membrane. In terms of biological role, f(1)F(0) ATP synthase produces ATP from ADP in the presence of a proton or sodium gradient. F-type ATPases consist of two structural domains, F(1) containing the extramembraneous catalytic core and F(0) containing the membrane proton channel, linked together by a central stalk and a peripheral stalk. During catalysis, ATP synthesis in the catalytic domain of F(1) is coupled via a rotary mechanism of the central stalk subunits to proton translocation. Component of the F(0) channel, it forms part of the peripheral stalk, linking F(1) to F(0). In Helicobacter acinonychis (strain Sheeba), this protein is ATP synthase subunit b.